The chain runs to 326 residues: Centriolar satellite-associated tubulin polyglutamylase complex regulator 1 (326 aa).

The required for interaction with PCM1 stretch occupies residues 1-111; sequence MLSPERLALP…HCLLQLLCPD (111 aa). The required for interaction with TPGS1, LRRC49, and TTLL1 stretch occupies residues 1–225; that stretch reads MLSPERLALP…SCPPPALVKE (225 aa).

Belongs to the CSTPP1 family. In terms of assembly, interacts with PCM1. Interacts with TTLL1, TPGS1, TPGS2 and LRRC49; the interactions link CSTPP1 to the complex TPGC. Binds to alpha-tubulin.

Its subcellular location is the cytoplasm. The protein resides in the cytoskeleton. It is found in the microtubule organizing center. The protein localises to the centrosome. It localises to the centriolar satellite. Functionally, regulator of the tubulin polyglutamylase complex (TPGC) that controls cytoskeletal organization, nuclear shape, and cilium disassembly by balancing microtubule and actin assembly. Regulates the assembly and stability of the TPGC and thereby modulates polyglutamylation of the microtubule, which antagonizes MAP4 binding. The protein is Centriolar satellite-associated tubulin polyglutamylase complex regulator 1 (CSTPP1) of Bos taurus (Bovine).